The sequence spans 24 residues: U4-ctenitoxin-Co1b (24 aa).

Disulfide bonds are present. As to expression, expressed by the venom gland.

Its subcellular location is the secreted. Its function is as follows. Omega-agatoxins are antagonists of voltage-gated calcium channels (Cav). In Ctenus ornatus (Brazilian spider), this protein is U4-ctenitoxin-Co1b.